Consider the following 323-residue polypeptide: Pyruvate dehydrogenase E1 component subunit beta (323 aa).

E60 is a thiamine diphosphate binding site. K(+) is bound by residues I113, A161, I162, D164, and N166.

In terms of assembly, heterodimer of an alpha and a beta chain. It depends on thiamine diphosphate as a cofactor.

It localises to the plastid. The protein localises to the chloroplast. It carries out the reaction N(6)-[(R)-lipoyl]-L-lysyl-[protein] + pyruvate + H(+) = N(6)-[(R)-S(8)-acetyldihydrolipoyl]-L-lysyl-[protein] + CO2. Functionally, the pyruvate dehydrogenase complex catalyzes the overall conversion of pyruvate to acetyl-CoA and CO(2). It contains multiple copies of three enzymatic components: pyruvate dehydrogenase (E1), dihydrolipoamide acetyltransferase (E2) and lipoamide dehydrogenase (E3). This is Pyruvate dehydrogenase E1 component subunit beta (pdhB) from Gracilaria tenuistipitata var. liui (Red alga).